Here is a 360-residue protein sequence, read N- to C-terminus: Histidinol-phosphate aminotransferase (360 aa).

K218 carries the N6-(pyridoxal phosphate)lysine modification.

It belongs to the class-II pyridoxal-phosphate-dependent aminotransferase family. Histidinol-phosphate aminotransferase subfamily. As to quaternary structure, homodimer. Pyridoxal 5'-phosphate is required as a cofactor.

The catalysed reaction is L-histidinol phosphate + 2-oxoglutarate = 3-(imidazol-4-yl)-2-oxopropyl phosphate + L-glutamate. It participates in amino-acid biosynthesis; L-histidine biosynthesis; L-histidine from 5-phospho-alpha-D-ribose 1-diphosphate: step 7/9. This chain is Histidinol-phosphate aminotransferase, found in Chlorobium phaeovibrioides (strain DSM 265 / 1930) (Prosthecochloris vibrioformis (strain DSM 265)).